The primary structure comprises 255 residues: MLKRQSAPLGTWLMSASASTAEALGYAGFDWLLVDMEHVPIEFRDLWHILQAIQCTGAQPIVRVAANDPVLLKRALDLGSTNVMVPFVENAEQARAAVSAVKYPPMGTRGFAAVHRASRYGTWKGYGQQANDSVSCILQIETATALANLEEIAAVPGVDALFLGPGDLSSVCGHIGNPAHPDIQAMISDAIVRCKAIGMPIGIVGGTPELVGSYLEQGYAFAAVASDMAMMMSKANELLVALKGRQAPEAVATAY.

The active-site Proton acceptor is the His38. The a divalent metal cation site is built by Glu141 and Asp167.

It belongs to the HpcH/HpaI aldolase family. In terms of assembly, homohexamer; trimer of dimers. Requires a divalent metal cation as cofactor.

The catalysed reaction is 2-dehydro-3,6-dideoxy-6-sulfo-D-gluconate = (2S)-3-sulfolactaldehyde + pyruvate. In terms of biological role, catalyzes the retro-aldol cleavage of 2-dehydro-3,6-dideoxy-6-sulfo-D-gluconate to (2S)-3-sulfolactaldehyde and pyruvate. Is involved in a degradation pathway of sulfoquinovose (SQ) that allows P.putida SQ1 to use SQ as the sole carbon and energy source for growth. The protein is 2-dehydro-3,6-dideoxy-6-sulfogluconate aldolase of Pseudomonas putida (Arthrobacter siderocapsulatus).